We begin with the raw amino-acid sequence, 344 residues long: Dihydroorotase (344 aa).

Residues His-13 and His-15 each coordinate Zn(2+). Substrate is bound by residues 15–17 (HLR) and Asn-41. Residues Lys-99, His-136, and His-174 each contribute to the Zn(2+) site. The residue at position 99 (Lys-99) is an N6-carboxylysine. Substrate is bound at residue His-136. Substrate is bound at residue Leu-219. Residue Asp-247 coordinates Zn(2+). Residue Asp-247 is part of the active site. Residues His-251 and Ala-263 each coordinate substrate.

It belongs to the metallo-dependent hydrolases superfamily. DHOase family. Class II DHOase subfamily. In terms of assembly, homodimer. Zn(2+) is required as a cofactor.

It catalyses the reaction (S)-dihydroorotate + H2O = N-carbamoyl-L-aspartate + H(+). It participates in pyrimidine metabolism; UMP biosynthesis via de novo pathway; (S)-dihydroorotate from bicarbonate: step 3/3. Catalyzes the reversible cyclization of carbamoyl aspartate to dihydroorotate. This Microcystis aeruginosa (strain NIES-843 / IAM M-2473) protein is Dihydroorotase.